The following is a 344-amino-acid chain: Glyceraldehyde-3-phosphate dehydrogenase (344 aa).

Residues 11–12 and G110 contribute to the NAD(+) site; that span reads TI. 139 to 141 serves as a coordination point for D-glyceraldehyde 3-phosphate; the sequence is SCN. C140 (nucleophile) is an active-site residue. R169 lines the NAD(+) pocket. D-glyceraldehyde 3-phosphate is bound at residue 195-196; that stretch reads HG. Residue Q302 participates in NAD(+) binding.

Belongs to the glyceraldehyde-3-phosphate dehydrogenase family. Homotetramer.

The protein resides in the cytoplasm. The catalysed reaction is D-glyceraldehyde 3-phosphate + phosphate + NADP(+) = (2R)-3-phospho-glyceroyl phosphate + NADPH + H(+). It carries out the reaction D-glyceraldehyde 3-phosphate + phosphate + NAD(+) = (2R)-3-phospho-glyceroyl phosphate + NADH + H(+). The protein operates within carbohydrate degradation; glycolysis; pyruvate from D-glyceraldehyde 3-phosphate: step 1/5. This is Glyceraldehyde-3-phosphate dehydrogenase from Pyrobaculum neutrophilum (strain DSM 2338 / JCM 9278 / NBRC 100436 / V24Sta) (Thermoproteus neutrophilus).